A 176-amino-acid chain; its full sequence is Natural cytotoxicity triggering receptor 3 (176 aa).

A signal peptide spans 1–18 (MAWMLLLILIMVYPGSCA). The region spanning 19-126 (LWVSQPPEIR…VGTGNGTRLV (108 aa)) is the Ig-like domain. At 19 to 135 (LWVSQPPEIR…VVEKEYPQLG (117 aa)) the chain is on the extracellular side. A disulfide bridge links Cys-39 with Cys-108. N-linked (GlcNAc...) asparagine glycans are attached at residues Asn-42 and Asn-121. Residues 136–156 (AGTVLLLRAGFYAVSFLSVAV) form a helical membrane-spanning segment. Topologically, residues 157–176 (GSTLYYQGKCHCHMGTHCHS) are cytoplasmic.

The protein belongs to the natural cytotoxicity receptor (NCR) family. In terms of assembly, homodimer in the unliganted form. Interacts with CD3Z. Interacts with and is activated by binding to NCR3LG1. Interacts with and is activated by binding to BAG6. Interacts with and is inhibited by binding to LGALS3.

Its subcellular location is the cell membrane. Its function is as follows. Cell membrane receptor of natural killer/NK cells that is activated by binding of extracellular ligands including BAG6 and NCR3LG1. Stimulates NK cells cytotoxicity toward neighboring cells producing these ligands. It controls, for instance, NK cells cytotoxicity against tumor cells. Engagement of NCR3 by BAG6 also promotes myeloid dendritic cells (DC) maturation, both through killing DCs that did not acquire a mature phenotype, and inducing the release by NK cells of TNFA and IFNG that promote DC maturation. This chain is Natural cytotoxicity triggering receptor 3 (NCR3), found in Macaca fascicularis (Crab-eating macaque).